The following is a 913-amino-acid chain: Protein translocase subunit SecA (913 aa).

ATP contacts are provided by residues Gln87, Gly105 to Thr109, and Asp512. Zn(2+)-binding residues include Cys897, Cys899, Cys908, and His909.

It belongs to the SecA family. Monomer and homodimer. Part of the essential Sec protein translocation apparatus which comprises SecA, SecYEG and auxiliary proteins SecDF-YajC and YidC. It depends on Zn(2+) as a cofactor.

Its subcellular location is the cell inner membrane. The protein localises to the cytoplasm. The enzyme catalyses ATP + H2O + cellular proteinSide 1 = ADP + phosphate + cellular proteinSide 2.. In terms of biological role, part of the Sec protein translocase complex. Interacts with the SecYEG preprotein conducting channel. Has a central role in coupling the hydrolysis of ATP to the transfer of proteins into and across the cell membrane, serving both as a receptor for the preprotein-SecB complex and as an ATP-driven molecular motor driving the stepwise translocation of polypeptide chains across the membrane. The polypeptide is Protein translocase subunit SecA (Pseudomonas savastanoi pv. phaseolicola (strain 1448A / Race 6) (Pseudomonas syringae pv. phaseolicola (strain 1448A / Race 6))).